Reading from the N-terminus, the 118-residue chain is D-dopachrome decarboxylase (118 aa).

At Pro2 the chain carries N-acetylproline.

The protein belongs to the MIF family. As to quaternary structure, homotrimer.

The protein localises to the cytoplasm. It carries out the reaction D-dopachrome + H(+) = 5,6-dihydroxyindole + CO2. Tautomerization of D-dopachrome with decarboxylation to give 5,6-dihydroxyindole (DHI). The protein is D-dopachrome decarboxylase (ddt) of Xenopus tropicalis (Western clawed frog).